A 293-amino-acid chain; its full sequence is Delta(3,5)-Delta(2,4)-dienoyl-CoA isomerase, mitochondrial (293 aa).

Residues 84–88 and glycine 142 contribute to the substrate site; that span reads AGLNL.

This sequence belongs to the enoyl-CoA hydratase/isomerase family.

Its subcellular location is the mitochondrion. The catalysed reaction is (3E,5Z)-octadienoyl-CoA = (2E,4E)-octadienoyl-CoA. It catalyses the reaction (3E,5Z,8Z,11Z,14Z)-eicosapentaenoyl-CoA = (2E,4E,8Z,11Z,14Z)-eicosapentaenoyl-CoA. The protein operates within lipid metabolism; fatty acid beta-oxidation. Isomerization of 3-trans,5-cis-dienoyl-CoA to 2-trans,4-trans-dienoyl-CoA. This Dictyostelium discoideum (Social amoeba) protein is Delta(3,5)-Delta(2,4)-dienoyl-CoA isomerase, mitochondrial (ech1).